The primary structure comprises 225 residues: Isoprenyl transferase 1 (225 aa).

Aspartate 3 is a catalytic residue. Aspartate 3 contributes to the Mg(2+) binding site. Residues 4-7 (GNRR), tryptophan 8, histidine 21, and 49-51 (SME) contribute to the substrate site. The active-site Proton acceptor is asparagine 52. Substrate-binding positions include arginine 55, arginine 174, and 180-182 (RLS). Glutamate 193 is a binding site for Mg(2+).

This sequence belongs to the UPP synthase family. In terms of assembly, homodimer. Requires Mg(2+) as cofactor.

Catalyzes the condensation of isopentenyl diphosphate (IPP) with allylic pyrophosphates generating different type of terpenoids. The polypeptide is Isoprenyl transferase 1 (Corynebacterium glutamicum (strain ATCC 13032 / DSM 20300 / JCM 1318 / BCRC 11384 / CCUG 27702 / LMG 3730 / NBRC 12168 / NCIMB 10025 / NRRL B-2784 / 534)).